An 821-amino-acid polypeptide reads, in one-letter code: Leucine--tRNA ligase (821 aa).

Residues 44–54 (PYPSGRIHMGH) carry the 'HIGH' region motif. The 'KMSKS' region motif lies at 589–593 (KMSKS). An ATP-binding site is contributed by Lys592.

It belongs to the class-I aminoacyl-tRNA synthetase family.

Its subcellular location is the cytoplasm. It carries out the reaction tRNA(Leu) + L-leucine + ATP = L-leucyl-tRNA(Leu) + AMP + diphosphate. The polypeptide is Leucine--tRNA ligase (Campylobacter concisus (strain 13826)).